The primary structure comprises 407 residues: Ornithine cyclodeaminase (407 aa).

Asn233, Ala234, Asp312, Thr344, Met345, Leu346, His347, Asp365, Asp388, and Val389 together coordinate NAD(+).

Belongs to the AgrE/ArgZ ornithine cyclodeaminase family. NAD(+) is required as a cofactor.

The enzyme catalyses L-ornithine = L-proline + NH4(+). Its function is as follows. Catalyzes the conversion of ornithine to proline, with the release of ammonia. This Archaeoglobus fulgidus (strain ATCC 49558 / DSM 4304 / JCM 9628 / NBRC 100126 / VC-16) protein is Ornithine cyclodeaminase.